We begin with the raw amino-acid sequence, 148 residues long: MAEEQAQPQLALERIYVKDMSLEVPGAGVFTKEWNPELDINLSSNAEKLDDDHYQVVLTVSVTAKNAEEAAFIAEVHQAGIFLLKDIPEDQIGQILGAYCPNVLFPYAREVISDIVTRGSFPQLLLAPVNFDQAYAQSQQQVDAEGNA.

Belongs to the SecB family. In terms of assembly, homotetramer, a dimer of dimers. One homotetramer interacts with 1 SecA dimer.

The protein localises to the cytoplasm. One of the proteins required for the normal export of preproteins out of the cell cytoplasm. It is a molecular chaperone that binds to a subset of precursor proteins, maintaining them in a translocation-competent state. It also specifically binds to its receptor SecA. The chain is Protein-export protein SecB from Psychrobacter arcticus (strain DSM 17307 / VKM B-2377 / 273-4).